The following is a 397-amino-acid chain: UDP-GlcNAc:betaGal beta-1,3-N-acetylglucosaminyltransferase 7 (397 aa).

The Cytoplasmic segment spans residues 1–6 (MSLWKK). Residues 7 to 26 (TLYKSVCLALALLVAVTVFQ) form a helical; Signal-anchor for type II membrane protein membrane-spanning segment. Residues 27 to 397 (RSVTPGQFLQ…LTCSLKFQVL (371 aa)) lie on the Lumenal side of the membrane. N-linked (GlcNAc...) asparagine glycosylation is found at Asn-84, Asn-90, Asn-210, and Asn-387.

This sequence belongs to the glycosyltransferase 31 family.

It is found in the golgi apparatus membrane. The protein operates within protein modification; protein glycosylation. Its function is as follows. N-acetyl glucosamine (GlcNAc) transferase that catalyzes the transfer of GlcNAc via a beta1-&gt;3 linkage from UDP-GlcNAc to the non-reducing terminal galactose (Gal) in the linearly growing chain of N- and O-linked keratan sulfate proteoglycans. Cooperates with B4GALT4 galactosyltransferase and CHST6 and CHST1 sulfotransferases to construct and elongate mono- and disulfated disaccharide units [-&gt;3Galbeta1-&gt;4(6-sulfoGlcNAcbeta)1-&gt;] and [-&gt;3(6-sulfoGalbeta)1-&gt;4(6-sulfoGlcNAcbeta)1-&gt;] within keratan sulfate polymer. Involved in biosynthesis of N-linked keratan sulfate proteoglycans in cornea, with an impact on proteoglycan fibril organization and corneal transparency. May play a role in the maintenance of tissue architecture by suppressing cellular motility and invasion. This Rattus norvegicus (Rat) protein is UDP-GlcNAc:betaGal beta-1,3-N-acetylglucosaminyltransferase 7 (B3gnt7).